Here is a 755-residue protein sequence, read N- to C-terminus: Polycomb protein SUZ12 (755 aa).

Disordered regions lie at residues 26 to 79, 333 to 377, and 392 to 420; these read KMGN…RRIS, NANG…SRRA, and AVGR…SDDR. Low complexity predominate over residues 30–42; sequence KASSQAQKRSQSQ. 2 stretches are compositionally biased toward polar residues: residues 43–57 and 349–359; these read TGDS…DGSG and TQPNGTHNEGT. Positions 411–420 are enriched in basic and acidic residues; that stretch reads GEDHPPSDDR. The segment at 436 to 458 adopts a C2H2-type zinc-finger fold; it reads FACLICGAENERLSQLRAHYMCH. Residues 580-645 are polycomb protein VEFS-Box; sequence IDDSWLLLKH…KADWLVSKRS (66 aa).

Belongs to the VEFS (VRN2-EMF2-FIS2-SU(Z)12) family. As to quaternary structure, component of the polycomb repressive complex 2 (PRC2) that consists of four core subunits icluding EZH2, EED, SUZ12, and RBBP4, among which EZH2 is the catalytic subunit and which minimally requires EED and SUZ12 for catalysis.

It is found in the nucleus. Component of the of the Polycomb Repressive Complex 2 (PRC2), a histone H3 lysine methyltransferase responsible for generating mono-, di-, and tri-methylation on Lys27 (H3K27me1, H3K27me2 and H3K27me3). The tri-methylated form is known to be critical in gene repression, and its proper placement is essential in defining repression patterns during development. SUZ12 is not a catalytic subunit but is required for the complex regulation of histone H3 lysine methylation by EZH2. The chain is Polycomb protein SUZ12 from Chaetomium thermophilum (strain DSM 1495 / CBS 144.50 / IMI 039719) (Thermochaetoides thermophila).